The following is a 1112-amino-acid chain: DNA repair protein rad13 (1112 aa).

An N-domain region spans residues 1 to 95 (MGVSGLWDIL…QTIQKRQARR (95 aa)). The Mg(2+) site is built by aspartate 30 and aspartate 77. Residues 395–414 (TDDLILQLATQQSLEENKKS) form the UIM domain. Residues 742-870 (KRSEKRDADE…LALEILHEFP (129 aa)) form an I-domain region. Residues glutamate 777, glutamate 779, aspartate 798, aspartate 800, and aspartate 849 each coordinate Mg(2+). Residues 1056–1112 (KMMASKNSSDSDSDSEDNFLASLTPKTNSSSISIENLPRKTKLSTSLLKKPSKRRRK) are disordered. The segment covering 1079 to 1089 (TPKTNSSSISI) has biased composition (polar residues).

The protein belongs to the XPG/RAD2 endonuclease family. XPG subfamily. Requires Mg(2+) as cofactor.

The protein resides in the nucleus. Functionally, single-stranded DNA endonuclease involved in excision repair of DNA damaged with UV light, bulky adducts, or cross-linking agents. Essential for the incision step of excision-repair. This is DNA repair protein rad13 (rad13) from Schizosaccharomyces pombe (strain 972 / ATCC 24843) (Fission yeast).